The following is a 67-amino-acid chain: Small ribosomal subunit protein eS27 (67 aa).

The Zn(2+) site is built by cysteine 22, cysteine 25, cysteine 41, and cysteine 44. The C4-type zinc finger occupies 22–44 (CPDCGNEQVVFSHAAMVVRCLVC).

The protein belongs to the eukaryotic ribosomal protein eS27 family. As to quaternary structure, part of the 30S ribosomal subunit. The cofactor is Zn(2+).

The chain is Small ribosomal subunit protein eS27 from Pyrobaculum islandicum (strain DSM 4184 / JCM 9189 / GEO3).